A 115-amino-acid polypeptide reads, in one-letter code: Tyrosine-protein phosphatase 18 (115 aa).

Positions 1 to 115 constitute a Tyrosine-protein phosphatase domain; the sequence is WLMIVEQKCR…ETGSDAPMVV (115 aa). Asp-83 contacts substrate.

The protein belongs to the protein-tyrosine phosphatase family.

It carries out the reaction O-phospho-L-tyrosyl-[protein] + H2O = L-tyrosyl-[protein] + phosphate. The sequence is that of Tyrosine-protein phosphatase 18 (STY-18) from Styela plicata (Wrinkled sea squirt).